Here is a 478-residue protein sequence, read N- to C-terminus: Protein nucleotidyltransferase YdiU (478 aa).

ATP-binding residues include Gly-84, Gly-86, Arg-87, Lys-107, Asp-119, Gly-120, Arg-170, and Arg-177. The active-site Proton acceptor is Asp-246. Mg(2+)-binding residues include Asn-247 and Asp-256. Asp-256 is an ATP binding site.

Belongs to the SELO family. The cofactor is Mg(2+). Requires Mn(2+) as cofactor.

It carries out the reaction L-seryl-[protein] + ATP = 3-O-(5'-adenylyl)-L-seryl-[protein] + diphosphate. The catalysed reaction is L-threonyl-[protein] + ATP = 3-O-(5'-adenylyl)-L-threonyl-[protein] + diphosphate. It catalyses the reaction L-tyrosyl-[protein] + ATP = O-(5'-adenylyl)-L-tyrosyl-[protein] + diphosphate. The enzyme catalyses L-histidyl-[protein] + UTP = N(tele)-(5'-uridylyl)-L-histidyl-[protein] + diphosphate. It carries out the reaction L-seryl-[protein] + UTP = O-(5'-uridylyl)-L-seryl-[protein] + diphosphate. The catalysed reaction is L-tyrosyl-[protein] + UTP = O-(5'-uridylyl)-L-tyrosyl-[protein] + diphosphate. In terms of biological role, nucleotidyltransferase involved in the post-translational modification of proteins. It can catalyze the addition of adenosine monophosphate (AMP) or uridine monophosphate (UMP) to a protein, resulting in modifications known as AMPylation and UMPylation. In Escherichia coli O139:H28 (strain E24377A / ETEC), this protein is Protein nucleotidyltransferase YdiU.